A 141-amino-acid polypeptide reads, in one-letter code: Flagellar assembly factor FliW (141 aa).

Belongs to the FliW family. As to quaternary structure, interacts with translational regulator CsrA and flagellin(s).

It is found in the cytoplasm. Its function is as follows. Acts as an anti-CsrA protein, binds CsrA and prevents it from repressing translation of its target genes, one of which is flagellin. Binds to flagellin and participates in the assembly of the flagellum. The polypeptide is Flagellar assembly factor FliW (Clostridium beijerinckii (strain ATCC 51743 / NCIMB 8052) (Clostridium acetobutylicum)).